We begin with the raw amino-acid sequence, 1348 residues long: MMVLEGASALSPFRRARLETRLQTLVPALRITGAWHVYFIRPEAGQSPDQATLQRILQANAAPAERDADASSRYVVPRLGTLSPWSSKATELVRGAGQPIQRVERGTRIDLAGWPDDASAQAAVAKLLHDPMTQSLLGSAAAAEALFNVPDPGQLRRVPLDGLEQANRDLGLALAQDEIDYLRERFGALGRDPADVELMMFAQANSEHCRHKIFNATWTIDGKPQERSLFRMIKHTHQQTPQHTLSAYSDNAAVVEGVPAARYRPDPATGQYRSEAVLPSAFAIKVETHNHPTAIAPFPGAATGAGGEIRDEGATGRGGKPKAGLTGFSVSHLRIPTLPQPWEAPRALNPRMAPALDIMLDGPLGGAAFNNEFGRPNLLGYFRSFELAEGPGLTRAYDKPIMLAGGLGAIDRNQVEKLRLQPGDAVIVLGGPAMLIGLGGGAASSVAAGDSAEALDFASVQRENPEMERRCQEVIDRCVALGVDNPIRWFHDVGAGGLSNAIPELLHDSGVGGIIDLGRVLTDDPSLSPLELWCNESQERYVLGVPQARLEEFAAICARERCPFAAVGVATAEERLVVGYGVLDAGNRESGVGNRNGTLVAADTASHHSPFPTRDSQLPIDLPMDVLFGKAPKMHRDAAHPGAPQWPVLQTASLDLQQAGLRVLAHPTVASKSFLVTIGDRSVGGLTAREQMIGPWQLPLADCAITLAGFDTFEGEAMSIGERTPLALLNAAASARMAVGEAITNLCAAPVQTLDSIKLSANWMAAAGHSGEDALLYDAVRAIGMELCPALELSVPVGKDSLSMQAQWQVGNRESGIGNGETPQPSASTIPDSPFPIPGETLKSVSPVSLIISAFAPVGDVRTQLTPLLRSGEESELWLIGLGGGKQRLGGSVLAQVYADDTALPAFGGEVPDLDDAQRLRSFFELIRDARDSGLLLAYHDRSDGGAFAALCEMAFASRQGLDITLDAWGDDAFRSLFNEELGAVVQIASEDRAAFADLVERHALTECAQRIARPTGTPRIRVSGQGRVLAEWRWEELFDAWWSVTHAMQKLRDNPDSADEERALARDFKASGLRPKLVFDPSDDVAAPFVATGTRPKVAILREQGVNGQIEMAYNFERAGFRPYDVHMSDLIEGRVDLSAFVGFAACGGFSYGDVLGAGRGWATSILERSALRDAFAAFFARSDTFALGVCNGCQMLSQLKDIIPGAEHWPRFLRNRSEQFEARTALLEVVESPSIFLRGMAGSRIPVAVAHGEGRAEFDSAVDQAAARVALRYIDGDGAVASQYPLNPNGSPDGITGLTSSDGRVTILMPHPERTPRSANLSWYPVDWGDDSPWLRMFRNARVWCG.

ATP is bound by residues 300-311 (GAATGAGGEIRD) and A701. D702, E741, N745, and D941 together coordinate Mg(2+). S943 contributes to the ATP binding site. The 250-residue stretch at 1099 to 1348 (VAILREQGVN…MFRNARVWCG (250 aa)) folds into the Glutamine amidotransferase type-1 domain. Catalysis depends on C1192, which acts as the Nucleophile. Residues H1313 and E1315 contribute to the active site.

In the N-terminal section; belongs to the FGAMS family. As to quaternary structure, monomer.

It localises to the cytoplasm. It carries out the reaction N(2)-formyl-N(1)-(5-phospho-beta-D-ribosyl)glycinamide + L-glutamine + ATP + H2O = 2-formamido-N(1)-(5-O-phospho-beta-D-ribosyl)acetamidine + L-glutamate + ADP + phosphate + H(+). It functions in the pathway purine metabolism; IMP biosynthesis via de novo pathway; 5-amino-1-(5-phospho-D-ribosyl)imidazole from N(2)-formyl-N(1)-(5-phospho-D-ribosyl)glycinamide: step 1/2. Functionally, phosphoribosylformylglycinamidine synthase involved in the purines biosynthetic pathway. Catalyzes the ATP-dependent conversion of formylglycinamide ribonucleotide (FGAR) and glutamine to yield formylglycinamidine ribonucleotide (FGAM) and glutamate. This Xanthomonas axonopodis pv. citri (strain 306) protein is Phosphoribosylformylglycinamidine synthase.